Here is a 263-residue protein sequence, read N- to C-terminus: Killer cell lectin-like receptor 4 (263 aa).

Residues 1–44 are Cytoplasmic-facing; that stretch reads MTEQEDTFSAVRFHKSSGLQNEMRLKETRKPEKARLRVCSVPWQ. Residues 45–65 form a helical; Signal-anchor for type II membrane protein membrane-spanning segment; it reads LIVIALGILISLRLVTVAVLM. Topologically, residues 66–263 are extracellular; it reads TNIFQYGQQK…CGKRLDKFPH (198 aa). N-linked (GlcNAc...) asparagine glycans are attached at residues N87 and N104. Positions 139–258 constitute a C-type lectin domain; the sequence is GVKVYWFCYG…SFICICGKRL (120 aa). 4 disulfide bridges follow: C146–C151, C164–C252, C168–C254, and C233–C246. N170 and N222 each carry an N-linked (GlcNAc...) asparagine glycan.

As to quaternary structure, homodimer; disulfide-linked. Interacts with the adapter protein TYROBP/DAP12; the interaction leads to natural killer cell activation.

It localises to the cell membrane. Its function is as follows. Receptor on natural killer (NK) cells for class I MHC. The chain is Killer cell lectin-like receptor 4 (Klra4) from Mus musculus (Mouse).